Consider the following 334-residue polypeptide: Zinc-finger homeodomain protein 10 (334 aa).

Low complexity predominate over residues 1–15 (MMDMTPTITTTTTPT). Disordered regions lie at residues 1 to 33 (MMDM…QPAK) and 103 to 164 (FHRR…LLSL). Residues 56 to 107 (YKECLKNHAAALGGHALDGCGEFMPSPSSISSDPTSLKCAACGCHRNFHRRD) form a ZF-HD dimerization-type; degenerate zinc finger. Residues 136-155 (PPPPPPPPPRSPNSASPPPI) are compositionally biased toward pro residues. The homeobox DNA-binding region spans 200–263 (RKRFRTKFSQ…NNKNTFNRRD (64 aa)). Positions 292–334 (NGHHGVGGGGELHQSVSSGGGGGGFDSDSGGANGGNVNGSSSS) are disordered. The segment covering 309 to 328 (SGGGGGGFDSDSGGANGGNV) has biased composition (gly residues).

As to quaternary structure, homo- and heterodimer with other ZFHD proteins. Interacts with MIF1, MIF2 and MIF3; these interactions prevent nuclear localization and DNA-binding to inhibit transcription regulation activity. Binds to ZHD1, ZHD2, ZHD4, ZHD5, ZHD6, ZHD7 and ZHD8. Interacts with KIN10 and KIN11. As to expression, mostly expressed in rosettes (e.g. young leaves), flowers (e.g. styles), siliques and inflorescence.

The protein localises to the nucleus. In terms of biological role, putative transcription factor. Probably involved in establishing polarity during leaf development through the gibberellic acid (GA) signaling pathway. This is Zinc-finger homeodomain protein 10 (ZHD10) from Arabidopsis thaliana (Mouse-ear cress).